The sequence spans 229 residues: Peptidase E (229 aa).

Residues Ser-120, Asp-135, and His-157 each act as charge relay system in the active site.

This sequence belongs to the peptidase S51 family.

The protein resides in the cytoplasm. It catalyses the reaction Dipeptidase E catalyzes the hydrolysis of dipeptides Asp-|-Xaa. It does not act on peptides with N-terminal Glu, Asn or Gln, nor does it cleave isoaspartyl peptides.. Its function is as follows. Hydrolyzes dipeptides containing N-terminal aspartate residues. May play a role in allowing the cell to use peptide aspartate to spare carbon otherwise required for the synthesis of the aspartate family of amino acids. The chain is Peptidase E from Salmonella newport (strain SL254).